The chain runs to 78 residues: Acyl carrier protein (78 aa).

The region spanning 1-76 is the Carrier domain; sequence MALFEDIQAV…DVVKYIEDNK (76 aa). The residue at position 36 (Ser-36) is an O-(pantetheine 4'-phosphoryl)serine.

It belongs to the acyl carrier protein (ACP) family. In terms of processing, 4'-phosphopantetheine is transferred from CoA to a specific serine of apo-ACP by AcpS. This modification is essential for activity because fatty acids are bound in thioester linkage to the sulfhydryl of the prosthetic group.

It is found in the cytoplasm. It functions in the pathway lipid metabolism; fatty acid biosynthesis. Functionally, carrier of the growing fatty acid chain in fatty acid biosynthesis. The sequence is that of Acyl carrier protein from Helicobacter pylori (strain Shi470).